The sequence spans 155 residues: Reticulon-like protein B23 (155 aa).

One can recognise a Reticulon domain in the interval 1 to 155 (MGEMGKAIGL…LNRRNGEILD (155 aa)). 2 consecutive transmembrane segments (helical) span residues 30–50 (SLISDVLIVLLSSLAILGLLF) and 117–137 (IISGVTIAYAGLCLFCLSMLF).

Its subcellular location is the endoplasmic reticulum membrane. This chain is Reticulon-like protein B23 (RTNLB23), found in Arabidopsis thaliana (Mouse-ear cress).